A 207-amino-acid polypeptide reads, in one-letter code: tRNA (pseudouridine(54)-N(1))-methyltransferase (207 aa).

Leu-137 lines the S-adenosyl-L-methionine pocket.

This sequence belongs to the methyltransferase superfamily. TrmY family. In terms of assembly, homodimer.

The protein resides in the cytoplasm. It carries out the reaction pseudouridine(54) in tRNA + S-adenosyl-L-methionine = N(1)-methylpseudouridine(54) in tRNA + S-adenosyl-L-homocysteine + H(+). In terms of biological role, specifically catalyzes the N1-methylation of pseudouridine at position 54 (Psi54) in tRNAs. The chain is tRNA (pseudouridine(54)-N(1))-methyltransferase from Halorubrum lacusprofundi (strain ATCC 49239 / DSM 5036 / JCM 8891 / ACAM 34).